Reading from the N-terminus, the 631-residue chain is Phosphomethylpyrimidine synthase (631 aa).

Substrate is bound by residues asparagine 239, methionine 268, tyrosine 297, histidine 333, 353–355 (SRG), 394–397 (DGLR), and glutamate 433. Residue histidine 437 participates in Zn(2+) binding. A substrate-binding site is contributed by tyrosine 460. Histidine 501 provides a ligand contact to Zn(2+). Residues cysteine 581, cysteine 584, and cysteine 589 each coordinate [4Fe-4S] cluster.

The protein belongs to the ThiC family. In terms of assembly, homodimer. Requires [4Fe-4S] cluster as cofactor.

The catalysed reaction is 5-amino-1-(5-phospho-beta-D-ribosyl)imidazole + S-adenosyl-L-methionine = 4-amino-2-methyl-5-(phosphooxymethyl)pyrimidine + CO + 5'-deoxyadenosine + formate + L-methionine + 3 H(+). The protein operates within cofactor biosynthesis; thiamine diphosphate biosynthesis. In terms of biological role, catalyzes the synthesis of the hydroxymethylpyrimidine phosphate (HMP-P) moiety of thiamine from aminoimidazole ribotide (AIR) in a radical S-adenosyl-L-methionine (SAM)-dependent reaction. This chain is Phosphomethylpyrimidine synthase, found in Shigella sonnei (strain Ss046).